A 279-amino-acid polypeptide reads, in one-letter code: Large ribosomal subunit protein uL2 (279 aa).

2 stretches are compositionally biased toward basic residues: residues 211–221 and 256–279; these read GRSRWRGKTPH and SYGKKTRDKKKPSTKFIVRGRKGK. The tract at residues 211-279 is disordered; that stretch reads GRSRWRGKTP…KFIVRGRKGK (69 aa).

This sequence belongs to the universal ribosomal protein uL2 family. As to quaternary structure, part of the 50S ribosomal subunit. Forms a bridge to the 30S subunit in the 70S ribosome.

Its function is as follows. One of the primary rRNA binding proteins. Required for association of the 30S and 50S subunits to form the 70S ribosome, for tRNA binding and peptide bond formation. It has been suggested to have peptidyltransferase activity; this is somewhat controversial. Makes several contacts with the 16S rRNA in the 70S ribosome. The chain is Large ribosomal subunit protein uL2 from Oenococcus oeni (strain ATCC BAA-331 / PSU-1).